Here is a 338-residue protein sequence, read N- to C-terminus: 1-aminocyclopropane-1-carboxylate deaminase (338 aa).

Position 51 is an N6-(pyridoxal phosphate)lysine (Lys51). Ser78 serves as the catalytic Nucleophile.

Belongs to the ACC deaminase/D-cysteine desulfhydrase family. As to quaternary structure, homotrimer. Pyridoxal 5'-phosphate is required as a cofactor.

The catalysed reaction is 1-aminocyclopropane-1-carboxylate + H2O = 2-oxobutanoate + NH4(+). Its function is as follows. Catalyzes a cyclopropane ring-opening reaction, the irreversible conversion of 1-aminocyclopropane-1-carboxylate (ACC) to ammonia and alpha-ketobutyrate. Allows growth on ACC as a nitrogen source. This is 1-aminocyclopropane-1-carboxylate deaminase from Burkholderia pseudomallei (strain 1106a).